The primary structure comprises 452 residues: Translation initiation factor eIF2B subunit gamma (452 aa).

Methionine 1 bears the N-acetylmethionine mark. At serine 260 the chain carries Phosphoserine.

Belongs to the eIF-2B gamma/epsilon subunits family. As to quaternary structure, component of the translation initiation factor 2B (eIF2B) complex which is a heterodecamer of two sets of five different subunits: alpha, beta, gamma, delta and epsilon. Subunits alpha, beta and delta comprise a regulatory subcomplex and subunits epsilon and gamma comprise a catalytic subcomplex. Within the complex, the hexameric regulatory complex resides at the center, with the two heterodimeric catalytic subcomplexes bound on opposite sides.

It is found in the cytoplasm. It localises to the cytosol. Activated by the chemical integrated stress response (ISR) inhibitor ISRIB which stimulates guanine nucleotide exchange factor activity for both phosphorylated and unphosphorylated eIF2. Its function is as follows. Acts as a component of the translation initiation factor 2B (eIF2B) complex, which catalyzes the exchange of GDP for GTP on the eukaryotic initiation factor 2 (eIF2) complex gamma subunit. Its guanine nucleotide exchange factor activity is repressed when bound to eIF2 complex phosphorylated on the alpha subunit, thereby limiting the amount of methionyl-initiator methionine tRNA available to the ribosome and consequently global translation is repressed. The sequence is that of Translation initiation factor eIF2B subunit gamma (EIF2B3) from Macaca fascicularis (Crab-eating macaque).